Reading from the N-terminus, the 364-residue chain is MAQQTPLYEQHTLCGARMVDFHGWMMPLHYGSQIDEHHAVRTDAGMFDVSHMTIVDLRGSRTREFLRYLLANDVAKLTKSGKALYSGMLNASGGVIDDLIVYYFTEDFFRLVVNSATREKDLSWITQHAEPFGIEITVRDDLSMIAVQGPNAQAKAATLFNDAQRQAVEGMKPFFGVQAGDLFIATTGYTGEAGYEIALPNEKAADFWRALVEAGVKPCGLGARDTLRLEAGMNLYGQEMDETISPLAANMGWTIAWEPADRDFIGREALEVQREHGTEKLVGLVMTEKGVLRNELPVRFTDAQGNQHEGIITSGTFSPTLGYSIALARVLEGIGETAIVQIRNREMSVKVTKPVFVRNGKAVA.

It belongs to the GcvT family. In terms of assembly, the glycine cleavage system is composed of four proteins: P, T, L and H.

The enzyme catalyses N(6)-[(R)-S(8)-aminomethyldihydrolipoyl]-L-lysyl-[protein] + (6S)-5,6,7,8-tetrahydrofolate = N(6)-[(R)-dihydrolipoyl]-L-lysyl-[protein] + (6R)-5,10-methylene-5,6,7,8-tetrahydrofolate + NH4(+). Functionally, the glycine cleavage system catalyzes the degradation of glycine. This chain is Aminomethyltransferase, found in Shigella sonnei (strain Ss046).